Here is a 103-residue protein sequence, read N- to C-terminus: Large ribosomal subunit protein bL21 (103 aa).

Belongs to the bacterial ribosomal protein bL21 family. In terms of assembly, part of the 50S ribosomal subunit. Contacts protein L20.

Its function is as follows. This protein binds to 23S rRNA in the presence of protein L20. This chain is Large ribosomal subunit protein bL21, found in Albidiferax ferrireducens (strain ATCC BAA-621 / DSM 15236 / T118) (Rhodoferax ferrireducens).